The sequence spans 262 residues: Ubiquinone biosynthesis protein COQ4, mitochondrial (262 aa).

Residues His-154, Asp-155, His-158, and Glu-170 each contribute to the Zn(2+) site. Residues 243–262 are disordered; it reads LGIEQPPDLRQMKKDMAKKK. Residues 252–262 show a composition bias toward basic and acidic residues; the sequence is RQMKKDMAKKK.

This sequence belongs to the COQ4 family. Component of a multi-subunit COQ enzyme complex, composed of at least COQ3, COQ4, COQ5, COQ6, COQ7 and COQ9. Requires Zn(2+) as cofactor.

It is found in the mitochondrion inner membrane. It catalyses the reaction a 4-hydroxy-3-methoxy-5-(all-trans-polyprenyl)benzoate + H(+) = a 2-methoxy-6-(all-trans-polyprenyl)phenol + CO2. It functions in the pathway cofactor biosynthesis; ubiquinone biosynthesis. Lyase that catalyzes the C1-decarboxylation of 4-hydroxy-3-methoxy-5-(all-trans-polyprenyl)benzoic acid into 2-methoxy-6-(all-trans-polyprenyl)phenol during ubiquinone biosynthesis. The protein is Ubiquinone biosynthesis protein COQ4, mitochondrial of Yarrowia lipolytica (strain CLIB 122 / E 150) (Yeast).